The chain runs to 203 residues: dITP/XTP pyrophosphatase (203 aa).

8 to 13 contacts substrate; sequence SNNAGK. Residues Asp40 and Asp69 each contribute to the Mg(2+) site. Asp69 serves as the catalytic Proton acceptor. Substrate contacts are provided by residues Ser70, 152–155, Lys175, and 180–181; these read FGYD and HR.

This sequence belongs to the HAM1 NTPase family. As to quaternary structure, homodimer. Mg(2+) is required as a cofactor.

The catalysed reaction is XTP + H2O = XMP + diphosphate + H(+). The enzyme catalyses dITP + H2O = dIMP + diphosphate + H(+). It carries out the reaction ITP + H2O = IMP + diphosphate + H(+). Functionally, pyrophosphatase that catalyzes the hydrolysis of nucleoside triphosphates to their monophosphate derivatives, with a high preference for the non-canonical purine nucleotides XTP (xanthosine triphosphate), dITP (deoxyinosine triphosphate) and ITP. Seems to function as a house-cleaning enzyme that removes non-canonical purine nucleotides from the nucleotide pool, thus preventing their incorporation into DNA/RNA and avoiding chromosomal lesions. The sequence is that of dITP/XTP pyrophosphatase from Nitrosomonas europaea (strain ATCC 19718 / CIP 103999 / KCTC 2705 / NBRC 14298).